The sequence spans 254 residues: 3-deoxy-manno-octulosonate cytidylyltransferase (254 aa).

This sequence belongs to the KdsB family.

It localises to the cytoplasm. It catalyses the reaction 3-deoxy-alpha-D-manno-oct-2-ulosonate + CTP = CMP-3-deoxy-beta-D-manno-octulosonate + diphosphate. It functions in the pathway nucleotide-sugar biosynthesis; CMP-3-deoxy-D-manno-octulosonate biosynthesis; CMP-3-deoxy-D-manno-octulosonate from 3-deoxy-D-manno-octulosonate and CTP: step 1/1. It participates in bacterial outer membrane biogenesis; lipopolysaccharide biosynthesis. In terms of biological role, activates KDO (a required 8-carbon sugar) for incorporation into bacterial lipopolysaccharide in Gram-negative bacteria. This chain is 3-deoxy-manno-octulosonate cytidylyltransferase, found in Pseudomonas aeruginosa (strain LESB58).